The following is a 143-amino-acid chain: 3-hydroxyacyl-[acyl-carrier-protein] dehydratase FabZ (143 aa).

Residue His49 is part of the active site.

The protein belongs to the thioester dehydratase family. FabZ subfamily.

The protein resides in the cytoplasm. It carries out the reaction a (3R)-hydroxyacyl-[ACP] = a (2E)-enoyl-[ACP] + H2O. Involved in unsaturated fatty acids biosynthesis. Catalyzes the dehydration of short chain beta-hydroxyacyl-ACPs and long chain saturated and unsaturated beta-hydroxyacyl-ACPs. In Wolbachia sp. subsp. Drosophila simulans (strain wRi), this protein is 3-hydroxyacyl-[acyl-carrier-protein] dehydratase FabZ.